We begin with the raw amino-acid sequence, 317 residues long: DNA-directed RNA polymerase subunit alpha (317 aa).

An alpha N-terminal domain (alpha-NTD) region spans residues 1 to 234; it reads MKQFVRPEFI…AHLEFFIDLN (234 aa). The segment at 250–317 is alpha C-terminal domain (alpha-CTD); it reads DKELDRTVEE…ASLGLAFRQS (68 aa).

The protein belongs to the RNA polymerase alpha chain family. In terms of assembly, homodimer. The RNAP catalytic core consists of 2 alpha, 1 beta, 1 beta' and 1 omega subunit. When a sigma factor is associated with the core the holoenzyme is formed, which can initiate transcription.

It catalyses the reaction RNA(n) + a ribonucleoside 5'-triphosphate = RNA(n+1) + diphosphate. DNA-dependent RNA polymerase catalyzes the transcription of DNA into RNA using the four ribonucleoside triphosphates as substrates. This chain is DNA-directed RNA polymerase subunit alpha, found in Mycoplasma mycoides subsp. mycoides SC (strain CCUG 32753 / NCTC 10114 / PG1).